We begin with the raw amino-acid sequence, 137 residues long: Flagellar basal body rod protein FlgB (137 aa).

The protein belongs to the flagella basal body rod proteins family. The basal body constitutes a major portion of the flagellar organelle and consists of a number of rings mounted on a central rod. In Gram-negative bacteria, at least four rings, L, P, S and M are present, whereas Gram-positive bacteria lack the L and P rings. The rod consists of about 26 subunits of FlgG in the distal portion, and FlgB, FlgC and FlgF build up the proximal portion of the rod with about 6 subunits each. Rod assembly occurs by export via the flagellum-specific pathway of its constituent proteins and by their incorporation into the rod structure in the probable order of FlgB, FlgC, FlgF and FlgG. Another protein, FliE, also assembles onto the stable rod structure.

The protein localises to the bacterial flagellum basal body. In terms of biological role, structural component of flagellum, the bacterial motility apparatus. Part of the rod structure of flagellar basal body. This Proteus mirabilis (strain HI4320) protein is Flagellar basal body rod protein FlgB.